The following is an 864-amino-acid chain: Dynamin-1 (864 aa).

In terms of domain architecture, Dynamin-type G spans 28–294 (DLDLPQIAVV…LTNHIRDTLP (267 aa)). Positions 38 to 45 (GGQSAGKS) are G1 motif. Positions 41, 43, 44, 45, 46, 59, and 60 each coordinate GDP. The tract at residues 64–66 (VTR) is G2 motif. A Phosphotyrosine modification is found at tyrosine 80. Tyrosine 125 carries the post-translational modification 3'-nitrotyrosine; alternate. Residue tyrosine 125 is modified to Phosphotyrosine; alternate. Residues 136-139 (DLPG) are G3 motif. The segment at 205–208 (TKLD) is G4 motif. The GDP site is built by lysine 206, aspartate 208, aspartate 211, asparagine 236, arginine 237, and glutamine 239. The segment at 235-238 (VNRS) is G5 motif. A phosphoserine mark is found at serine 306 and serine 347. Tyrosine 354 is modified (phosphotyrosine). The residue at position 512 (serine 512) is a Phosphoserine. Residues 519-625 (LVIRKGWLTI…WKASFLRAGV (107 aa)) enclose the PH domain. The 92-residue stretch at 659-750 (VETIRNLVDS…IIGDINTTTV (92 aa)) folds into the GED domain. Residues 767–864 (SVPAGRRSPT…PESPRPPFDL (98 aa)) form a disordered region. The residue at position 774 (serine 774) is a Phosphoserine; by GSK3-beta. Serine 778 carries the post-translational modification Phosphoserine. Arginine 796 carries the post-translational modification Omega-N-methylarginine. Serine 822 bears the Phosphoserine mark. A compositionally biased stretch (pro residues) spans 825–843 (PFGPPPQVPSRPNRAPPGV). Residues serine 851 and serine 857 each carry the phosphoserine modification.

Belongs to the TRAFAC class dynamin-like GTPase superfamily. Dynamin/Fzo/YdjA family. In terms of assembly, homodimer; homodimerization is mediated by the dynamin-type G domain which promotes assembly-stimulated GTPase activity. Homo-tetramer formed from two dimers in the absence of lipid. Oligomerizes into a helical polymer that self-assembles around the vesicle membrane, when associated to the menbrane through lipid binding. Interacts (via C-terminal proline-rich domain (PRD)) with SNX9 (via SH3 domain); this interaction allows regulation of DNM1 self-assembly during late stages of endocytic vesicle formation and supports DNM1's early functions in accelerating clathrin-coated pits (CCPs) maturation in non neuronals cell. Interacts (via C-terminal proline-rich domain (PRD)) with MYO1E (via SH3 domain); this interaction regulates receptor-mediated endocytosis. Interacts with SNX33 (via SH3 domain); this interaction decreases DNM1-dependent endocytosis. Interacts with DIAPH1. Interacts with GRB2 (via SH3 domain); this interaction mediates disassembly of DNM1 polymers, therefore modulates self-assembly. Forms a complex with BIN1 (via SH3 domain) and SH3GL2 (via SH3 domain). Forms a complex with SH3GL2 (via SH3 domain) and AMPH (via SH3 domain). Forms a complex with SH3GL2 (via SH3 domain) and SYNJ1. Interacts with AMPH. Interacts (via C-terminal proline-rich domain (PRD)) with SYT1; this interaction facilitates vesicle fission during clathrin-mediated endocytosis (CME). Interacts (via C-terminal proline-rich domain (PRD)) with PLCG1 (via SH3 domain); this interaction stimulates the release of GDP from DNM1 and enhances DNM1-dependent endocytosis. Interacts with SNPH; this interaction inhibits the binding of DNM1 to AMPH and DNM1-receptor-mediated endocytosis. Interacts with CAV1. Interacts with SH3GLB1 (via SH3 domain). Interacts with PACSIN1 (via SH3 domain), PACSIN2 (via SH3 domain) and PACSIN3 (via SH3 domain). Interacts with UNC119; this interaction decreases DNM1's GTPase activity and affects DNM1's interaction with AMPH. Interacts (GTP-bound form) with DNAJC6; this interaction allows clathrin-coated vesicle (CCV) formation at the plasma membrane. Post-translationally, phosphorylation at Ser-774 by GSK3B/GSK3-beta leads to inactivation of receptor-mediated endocytosis in non-neuronal cells. Dephosphorylation at Ser-774, through the EGFR downstream signaling, leads to activation and regulates early stages of clathrin-mediated endocytosis (CME). Phosphorylated by CDK5 leading to synaptic vesicle endocytosis (SVE) activation.

It localises to the cell membrane. The protein resides in the membrane. The protein localises to the clathrin-coated pit. Its subcellular location is the cytoplasmic vesicle. It is found in the presynapse. It localises to the secretory vesicle. The protein resides in the chromaffin granule. It carries out the reaction GTP + H2O = GDP + phosphate + H(+). GTPase activity is activated by 1-phosphatidyl-1D-myo-inositol 4,5-bisphosphate. GTPase activity is inhibited by the heterodimer G protein formed by GNB1 and GNG2 with an IC(50)=400 nM when DNM1 concentration is 5 nM. Catalyzes the hydrolysis of GTP and utilizes this energy to mediate vesicle scission and participates in many forms of endocytosis, such as clathrin-mediated endocytosis or synaptic vesicle endocytosis as well as rapid endocytosis (RE). Associates to the membrane, through lipid binding, and self-assembles into rings and stacks of interconnected rings through oligomerization to form a helical polymer around the vesicle membrane leading to constriction of invaginated coated pits around their necks. Self-assembly of the helical polymer induces membrane tubules narrowing until the polymer reaches a length sufficient to trigger GTP hydrolysis. Depending on the curvature imposed on the tubules, membrane detachment from the helical polymer upon GTP hydrolysis can cause spontaneous hemifission followed by complete fission. May play a role in regulating early stages of clathrin-mediated endocytosis in non-neuronal cells through its activation by dephosphorylation via the signaling downstream of EGFR. Controls vesicle size at a step before fission, during formation of membrane pits, at hippocampal synapses. Controls plastic adaptation of the synaptic vesicle recycling machinery to high levels of activity. Mediates rapid endocytosis (RE), a Ca(2+)-dependent and clathrin- and K(+)-independent process in chromaffin cells. Microtubule-associated force-producing protein involved in producing microtubule bundles and able to bind and hydrolyze GTP. Through its interaction with DNAJC6, acts during the early steps of clathrin-coated vesicle (CCV) formation. The polypeptide is Dynamin-1 (Homo sapiens (Human)).